The primary structure comprises 469 residues: 3-isopropylmalate dehydratase large subunit (469 aa).

[4Fe-4S] cluster is bound by residues Cys-347, Cys-408, and Cys-411.

This sequence belongs to the aconitase/IPM isomerase family. LeuC type 1 subfamily. Heterodimer of LeuC and LeuD. It depends on [4Fe-4S] cluster as a cofactor.

The catalysed reaction is (2R,3S)-3-isopropylmalate = (2S)-2-isopropylmalate. It functions in the pathway amino-acid biosynthesis; L-leucine biosynthesis; L-leucine from 3-methyl-2-oxobutanoate: step 2/4. Functionally, catalyzes the isomerization between 2-isopropylmalate and 3-isopropylmalate, via the formation of 2-isopropylmaleate. This is 3-isopropylmalate dehydratase large subunit from Histophilus somni (strain 129Pt) (Haemophilus somnus).